The sequence spans 138 residues: uncharacterized protein (138 aa).

It localises to the plastid. The protein localises to the chloroplast. This is an uncharacterized protein from Chlorella vulgaris (Green alga).